The sequence spans 1363 residues: MQLSFTQKKNVRKSFGKLAETLSIPNLIEVQKNSYKQLTDFDSEAGDLSKGFDRVFKSIFPIEDLNDKATLEYVSYRLEKPKFDTEECIQRGLSFTSALKCTLRLVVYEIDQENNTKDILSAKEQEVYMGEVPMMTDSGTFITNGVQRVVVNQMHRSPGVFFDHDKGKSHASGKLLFNCRVIPNRGSWLDLEYDVKDFLYFKIDRKKKIFASTLLMALGLTKSEIADEFYDKDTYSFDAKTGKWKTKFNPENYKAKNFSEEVTDAKTGNVVIKLGDKINFLTAKKLASDGLKDILVSQESLIGKYLHNEVKVSDDEEEGTFGIGTELNDTIIKQILEANISSIEISITNSINKGPYLLTTILNDKNNSKNDAITEIYKVLRPGEPPTVEIATQIFNNLFFSSDRYDLSDVGRVKMNSRLNLECSDKITILRNDDIIAIVHKMLDLRDGKDEVDDIDHLGNRRVRSVGELVENQARIGVYRMERAIKEKMTTLDIESAMPQDLINAKPLTVSLKDFFVSSQLSQFMDQTNPLSEITHKRRVSALGPGGLTRERAGFEVRDVHPTHYGRICPIETPEGPNIGLINSLSTYAKINKYGFIESPYKKVLNGIVQDKVEYLSAMEETKYTIAQANAKIDKSGKILEELVPCRENLNFVLSNPSKIDYIDVSPKQLVSVAASLIPFLENDDANRALMGSNMMRQAVPLLKPESPLVGTGIESDVALDSGVTIVASRDGTVDKIDGKRIVIKATEETDFTKSGVDIYNLQKFKRSNQNTCINQKPLVRVGDKVKSGDIIADGPSTKLGELALGKNVTVAFMPWQGYNFEDSILISERCVTDDVFTSVHIVEYEVMARDTKLGEEEITRDIPNVNEEALKNLDESGIVYIGAEVKAGDILVGKVTPKGDSASGPEEKLLRSIFGEKAIDVTDTSLKMSRGSSGTVVDVRVFNRHGIEKDERSITIERAEIDTVQQDKIVEEEILERSIKQRANQILSGASLTKKIKDLDEGTKLDLEIINKININDVFKITVGNVNDEASIAQLKDQYNQAKQDIQERFEDKVLKIRSGDDLLPSVMKMVKVFVAIKRRLRPGDKMSGRHGNKGVVSKIVPVEDMPYREDGRPVDIVLNPLGVPSRMNVGQILETHLGWACKEFGEEVKRLVNENNKKFEKTEKISSFLKSVYGKEVFDGGIEKLNKTEFSDLCENLQNGIAISTPVFDGAKEKDVSEMLELAKLPTSGQTNLWDGRTGEMFDRPVTVGIIYMLKLHHLVEDKIHARSTGPYSLVTQQPLGGKAQLGGQRFGEMEVWALEAYGASYTLQEILTVKSDDVAGRVKVYETIVKGEENFESGIPESFNVLVKEIKSLALNIELN.

It belongs to the RNA polymerase beta chain family. In terms of assembly, the RNAP catalytic core consists of 2 alpha, 1 beta, 1 beta' and 1 omega subunit. When a sigma factor is associated with the core the holoenzyme is formed, which can initiate transcription.

The enzyme catalyses RNA(n) + a ribonucleoside 5'-triphosphate = RNA(n+1) + diphosphate. DNA-dependent RNA polymerase catalyzes the transcription of DNA into RNA using the four ribonucleoside triphosphates as substrates. This chain is DNA-directed RNA polymerase subunit beta, found in Pelagibacter ubique (strain HTCC1062).